The sequence spans 293 residues: HTH-type transcriptional regulator HdfR (293 aa).

The region spanning 1–58 (MDTELLKTFLEVSRTRHFGRAAESLYLTQSAVSFRIRQLENQLGANLFTRHRNNIRLT) is the HTH lysR-type domain. Residues 18 to 37 (FGRAAESLYLTQSAVSFRIR) constitute a DNA-binding region (H-T-H motif).

This sequence belongs to the LysR transcriptional regulatory family.

Negatively regulates the transcription of the flagellar master operon flhDC by binding to the upstream region of the operon. The protein is HTH-type transcriptional regulator HdfR of Yersinia pseudotuberculosis serotype O:1b (strain IP 31758).